The sequence spans 306 residues: MELVFLGTGAGLPSKTRNVSAVALNMTQEINEVWLFDCGEATQHQILHTNLKPRKITKIFITHLHGDHIYGLPGFLSSRSFQSGENQPLCIYGPIGIKEFVESTLRLSQTNLTYPITIKEITEDGNLFETNEMMVETKKLQHGIDSYGYRIKEKDKPGELLVDKLKQIGIAPGPIYQQIKENEITTLDNGSIIYRNDVLGPAKKGKVISILGDTRYSIDHIPFIKFSDILVHESTFTQDKELLAFEYNHSTNVQAAKLAKEANINKLYLTHVSSRYQAEDIDSIIEEARKIFPSTWLANDFSVYEI.

Zn(2+) is bound by residues His-63, His-65, Asp-67, His-68, His-142, Asp-213, and His-271. The active-site Proton acceptor is the Asp-67.

This sequence belongs to the RNase Z family. Homodimer. Zn(2+) is required as a cofactor.

The catalysed reaction is Endonucleolytic cleavage of RNA, removing extra 3' nucleotides from tRNA precursor, generating 3' termini of tRNAs. A 3'-hydroxy group is left at the tRNA terminus and a 5'-phosphoryl group is left at the trailer molecule.. Functionally, zinc phosphodiesterase, which displays some tRNA 3'-processing endonuclease activity. Probably involved in tRNA maturation, by removing a 3'-trailer from precursor tRNA. The chain is Ribonuclease Z from Oceanobacillus iheyensis (strain DSM 14371 / CIP 107618 / JCM 11309 / KCTC 3954 / HTE831).